An 81-amino-acid chain; its full sequence is Adenoregulin-related peptide (81 aa).

Positions 1 to 22 (MAFLKKSLLLVLFLGLVSLSIC) are cleaved as a signal peptide. Positions 23–43 (EEEKRENEDEEEQEDDEQSEM) are excised as a propeptide. The interval 24–46 (EEKRENEDEEEQEDDEQSEMKRG) is disordered. Residues 30–40 (EDEEEQEDDEQ) show a composition bias toward acidic residues. Isoleucine 78 is subject to Isoleucine amide. Residues 79–81 (GEQ) constitute a propeptide that is removed on maturation.

As to expression, expressed by the skin glands.

It is found in the secreted. In terms of biological role, has antibacterial activity against Gram-positive bacterium M.luteus NCT C2665 and against Gram-negative bacterium E.coli K12D31. The protein is Adenoregulin-related peptide of Agalychnis callidryas (Red-eyed tree frog).